The following is a 204-amino-acid chain: CASP-like protein 4B4 (204 aa).

The Cytoplasmic segment spans residues 1 to 60; the sequence is MSAAVAASSGAPAADVEKGAAAADANVDGGGAPAAAAASGEGVVSAVVRRWRRQDLLEKS. A helical transmembrane segment spans residues 61–81; sequence GSALRVAAWAFSLLAFVVMGA. The Extracellular portion of the chain corresponds to 82 to 98; the sequence is NDHGDWRQFEHYEEYRY. Residues 99-119 form a helical membrane-spanning segment; sequence VVAIGVLAFIYTTLQLVRHGV. Residues 120 to 130 lie on the Cytoplasmic side of the membrane; the sequence is RLTGGQDLQGK. The helical transmembrane segment at 131–151 threads the bilayer; sequence VAVLVDFAGDQVTAYLLMSAV. Topologically, residues 152-175 are extracellular; that stretch reads SAAIPITNRMREGADNVFTDSSAA. The helical transmembrane segment at 176–196 threads the bilayer; it reads SISMAFFAFLCLALSALVSGF. Topologically, residues 197-204 are cytoplasmic; it reads KLAKQTYI.

Belongs to the Casparian strip membrane proteins (CASP) family. In terms of assembly, homodimer and heterodimers.

Its subcellular location is the cell membrane. This is CASP-like protein 4B4 from Oryza sativa subsp. japonica (Rice).